The following is a 573-amino-acid chain: Dihydroxy-acid dehydratase (573 aa).

C62 contacts [2Fe-2S] cluster. Position 94 (D94) interacts with Mg(2+). Position 135 (C135) interacts with [2Fe-2S] cluster. D136 and K137 together coordinate Mg(2+). N6-carboxylysine is present on K137. C212 contributes to the [2Fe-2S] cluster binding site. E463 lines the Mg(2+) pocket. S489 acts as the Proton acceptor in catalysis.

It belongs to the IlvD/Edd family. As to quaternary structure, homodimer. Requires [2Fe-2S] cluster as cofactor. It depends on Mg(2+) as a cofactor.

It catalyses the reaction (2R)-2,3-dihydroxy-3-methylbutanoate = 3-methyl-2-oxobutanoate + H2O. The enzyme catalyses (2R,3R)-2,3-dihydroxy-3-methylpentanoate = (S)-3-methyl-2-oxopentanoate + H2O. Its pathway is amino-acid biosynthesis; L-isoleucine biosynthesis; L-isoleucine from 2-oxobutanoate: step 3/4. It functions in the pathway amino-acid biosynthesis; L-valine biosynthesis; L-valine from pyruvate: step 3/4. Functionally, functions in the biosynthesis of branched-chain amino acids. Catalyzes the dehydration of (2R,3R)-2,3-dihydroxy-3-methylpentanoate (2,3-dihydroxy-3-methylvalerate) into 2-oxo-3-methylpentanoate (2-oxo-3-methylvalerate) and of (2R)-2,3-dihydroxy-3-methylbutanoate (2,3-dihydroxyisovalerate) into 2-oxo-3-methylbutanoate (2-oxoisovalerate), the penultimate precursor to L-isoleucine and L-valine, respectively. The polypeptide is Dihydroxy-acid dehydratase (Renibacterium salmoninarum (strain ATCC 33209 / DSM 20767 / JCM 11484 / NBRC 15589 / NCIMB 2235)).